The sequence spans 163 residues: Leptin (163 aa).

An N-terminal signal peptide occupies residues 1–18; sequence MCWRPLCRLWSYLVYVQA. Cysteines 113 and 163 form a disulfide.

Belongs to the leptin family. Not exclusively localized in adipose tissue but is also expressed in liver.

It is found in the secreted. Its function is as follows. Key player in the regulation of energy balance and body weight control. Once released into the circulation, has central and peripheral effects by binding LEPR, found in many tissues, which results in the activation of several major signaling pathways. This chain is Leptin (LEP), found in Gallus gallus (Chicken).